We begin with the raw amino-acid sequence, 101 residues long: NADH-quinone oxidoreductase subunit K (101 aa).

3 consecutive transmembrane segments (helical) span residues 4–24 (LGHM…GIFL), 30–50 (IVLL…FVAF), and 62–82 (FVFF…AILV).

This sequence belongs to the complex I subunit 4L family. In terms of assembly, NDH-1 is composed of 14 different subunits. Subunits NuoA, H, J, K, L, M, N constitute the membrane sector of the complex.

The protein resides in the cell inner membrane. It carries out the reaction a quinone + NADH + 5 H(+)(in) = a quinol + NAD(+) + 4 H(+)(out). In terms of biological role, NDH-1 shuttles electrons from NADH, via FMN and iron-sulfur (Fe-S) centers, to quinones in the respiratory chain. The immediate electron acceptor for the enzyme in this species is believed to be ubiquinone. Couples the redox reaction to proton translocation (for every two electrons transferred, four hydrogen ions are translocated across the cytoplasmic membrane), and thus conserves the redox energy in a proton gradient. This is NADH-quinone oxidoreductase subunit K from Stenotrophomonas maltophilia (strain R551-3).